The chain runs to 328 residues: Beta-ribofuranosylphenol 5'-phosphate synthase (328 aa).

This sequence belongs to the beta-RFA-P synthase family. As to quaternary structure, homodimer. Requires Mg(2+) as cofactor.

It catalyses the reaction 5-phospho-alpha-D-ribose 1-diphosphate + 4-hydroxybenzoate + H(+) = 4-(beta-D-ribofuranosyl)phenol 5'-phosphate + CO2 + diphosphate. It carries out the reaction 4-aminobenzoate + 5-phospho-alpha-D-ribose 1-diphosphate + H(+) = 4-(beta-D-ribofuranosyl)aminobenzene 5'-phosphate + CO2 + diphosphate. Its pathway is cofactor biosynthesis; 5,6,7,8-tetrahydromethanopterin biosynthesis. Catalyzes the condensation of 4-hydroxybenzoate (HB) with 5-phospho-alpha-D-ribose 1-diphosphate (PRPP) to produce beta-ribofuranosylphenol 5'-phosphate (beta-RFH-P). Also catalyzes the condensation of 4-aminobenzoate (pABA) with PRPP to produce beta-ribofuranosylaminobenzene 5'-phosphate (beta-RFA-P). Only 4-hydroxybenzoate is known to be biosynthesized by methanogenic archaea, but 4-aminobenzoate can be used as substrate by growing methanogens when it is present in the growth medium. This chain is Beta-ribofuranosylphenol 5'-phosphate synthase, found in Methanocaldococcus jannaschii (strain ATCC 43067 / DSM 2661 / JAL-1 / JCM 10045 / NBRC 100440) (Methanococcus jannaschii).